We begin with the raw amino-acid sequence, 216 residues long: Corrinoid protein DSY3155 (216 aa).

A B12-binding N-terminal domain is found at 1-90 (MIMSLLDELK…EIAKKGMSEG (90 aa)). A B12-binding domain is found at 93-216 (KGKIVLGTVE…VELANKILGK (124 aa)). Residue H106 participates in methylcob(III)alamin binding.

This sequence belongs to the methylamine corrinoid protein family.

Probably harbors a corrinoid prosthetic group and acts as a methyl group carrier between MtgB and MtgA. A methyl group from glycine betaine is likely first transferred to the corrinoid prosthetic group of the enzyme by MtgB, and then transferred to tetrahydrofolate (THF) by MtgA. The methyl group may then be ultimately converted to carbon dioxide, and its oxidation would also provide reducing equivalents for anaerobic respiration. Thus, may function in the pathway that allows anaerobic methylotrophic growth of D.hafniense using glycine betaine. This is Corrinoid protein DSY3155 from Desulfitobacterium hafniense (strain Y51).